The chain runs to 408 residues: Arginine biosynthesis bifunctional protein ArgJ (408 aa).

Substrate is bound by residues Thr158, Lys184, Thr195, Glu281, Asn403, and Thr408. The active-site Nucleophile is the Thr195.

This sequence belongs to the ArgJ family. Heterotetramer of two alpha and two beta chains.

The protein resides in the cytoplasm. The catalysed reaction is N(2)-acetyl-L-ornithine + L-glutamate = N-acetyl-L-glutamate + L-ornithine. It catalyses the reaction L-glutamate + acetyl-CoA = N-acetyl-L-glutamate + CoA + H(+). The protein operates within amino-acid biosynthesis; L-arginine biosynthesis; L-ornithine and N-acetyl-L-glutamate from L-glutamate and N(2)-acetyl-L-ornithine (cyclic): step 1/1. It functions in the pathway amino-acid biosynthesis; L-arginine biosynthesis; N(2)-acetyl-L-ornithine from L-glutamate: step 1/4. Functionally, catalyzes two activities which are involved in the cyclic version of arginine biosynthesis: the synthesis of N-acetylglutamate from glutamate and acetyl-CoA as the acetyl donor, and of ornithine by transacetylation between N(2)-acetylornithine and glutamate. The chain is Arginine biosynthesis bifunctional protein ArgJ from Shouchella clausii (strain KSM-K16) (Alkalihalobacillus clausii).